Reading from the N-terminus, the 95-residue chain is Large ribosomal subunit protein bL27 (95 aa).

The disordered stretch occupies residues 1-25 (MAHKKGTGSTRNGRDSNAQRLGVKR). Positions 7 to 19 (TGSTRNGRDSNAQ) are enriched in polar residues.

The protein belongs to the bacterial ribosomal protein bL27 family.

The sequence is that of Large ribosomal subunit protein bL27 from Gloeobacter violaceus (strain ATCC 29082 / PCC 7421).